Reading from the N-terminus, the 1643-residue chain is DNA-directed RNA polymerase subunit beta' (1643 aa).

Zn(2+) is bound by residues Cys64, Cys66, Cys79, and Cys82. Residues Asp684, Asp686, and Asp688 each coordinate Mg(2+). Cys1046, Cys1239, Cys1246, and Cys1249 together coordinate Zn(2+).

It belongs to the RNA polymerase beta' chain family. As to quaternary structure, the RNAP catalytic core consists of 2 alpha, 1 beta, 1 beta' and 1 omega subunit. When a sigma factor is associated with the core the holoenzyme is formed, which can initiate transcription. It depends on Mg(2+) as a cofactor. The cofactor is Zn(2+).

The catalysed reaction is RNA(n) + a ribonucleoside 5'-triphosphate = RNA(n+1) + diphosphate. DNA-dependent RNA polymerase catalyzes the transcription of DNA into RNA using the four ribonucleoside triphosphates as substrates. This is DNA-directed RNA polymerase subunit beta' from Petrotoga mobilis (strain DSM 10674 / SJ95).